Consider the following 489-residue polypeptide: Serotonin-gated chloride channel mod-1 (489 aa).

Residues 1–20 form the signal peptide; sequence MKFIPEITLLLLLFVHSTQA. Over 21 to 240 the chain is Extracellular; it reads KGKRRKCPEG…VTFTFKRRYG (220 aa). Asn44, Asn103, and Asn144 each carry an N-linked (GlcNAc...) asparagine glycan. Positions 180 and 226 each coordinate serotonin. Transmembrane regions (helical) follow at residues 241-261, 274-294, and 304-324; these read FYII…WVSF, VGIS…KNLP, and VWML…AFVC. Over 325 to 458 the chain is Cytoplasmic; the sequence is YISRCQNSVR…ARFHPEAVDK (134 aa). The disordered stretch occupies residues 365-398; the sequence is GSVISHYHPTSNGNGNNNRHDTPQVTGRGSLHRN. Polar residues predominate over residues 372–391; it reads HPTSNGNGNNNRHDTPQVTG. The helical transmembrane segment at 459-479 threads the bilayer; the sequence is FSIVAFPLAFTMFNLVYWWHY.

The protein belongs to the ligand-gated ion channel (TC 1.A.9) family. As to expression, expressed in a subset of muscles, and head and tail neurons, including RME and GABAergic ventral nerve cord neurons. Expressed in AIY, RME, RID, RIF, ASI, DD1-6, and PVN neurons.

It localises to the membrane. Its subcellular location is the cell membrane. Functionally, functions as a 5-hydroxytryptamine (serotonin) receptor. This receptor is a ligand-gated anion-specific ion channel, selective for chloride ions. Relays a long-range endocrine signal from the body cavity neurons to modulate distal adipose triglyceride lipase atgl-1 function, via the nuclear receptor nhr-76. Together with the G-protein coupled serotonin receptor ser-1 involved in male mating behavior. May mediate an inhibitory effect of serotonin on egg laying. Involved in regulating locomotory behavior, perhaps by modulating interneuronal signaling, acting in concert with G-protein coupled serotonin receptor ser-4. In the presence of food, plays a role in initiating and extending dwelling behavior, perhaps acting in AIY, RIF and ASI neurons, in opposition to neuropeptide PDF-mediated signaling. Plays a role in aversive learning upon exposure to pathogens such as Gram-negative bacterium P.aeruginosa strain PA14; perhaps acting in interneurons in response to serotonin released by the serotonergic ADF neurons. This Caenorhabditis elegans protein is Serotonin-gated chloride channel mod-1.